The following is a 333-amino-acid chain: Ketol-acid reductoisomerase (NADP(+)) (333 aa).

Residues 2–182 (ANIYYDADCD…GGGRAGILET (181 aa)) enclose the KARI N-terminal Rossmann domain. NADP(+) contacts are provided by residues 25 to 28 (YGSQ), lysine 48, serine 51, serine 53, and 83 to 86 (DTIQ). The active site involves histidine 108. Glycine 134 contacts NADP(+). One can recognise a KARI C-terminal knotted domain in the interval 183–331 (SFREETETDL…KKLRSMMKWL (149 aa)). Mg(2+) is bound by residues aspartate 191, glutamate 195, glutamate 227, and glutamate 231. Serine 252 lines the substrate pocket.

Belongs to the ketol-acid reductoisomerase family. Requires Mg(2+) as cofactor.

The catalysed reaction is (2R)-2,3-dihydroxy-3-methylbutanoate + NADP(+) = (2S)-2-acetolactate + NADPH + H(+). It carries out the reaction (2R,3R)-2,3-dihydroxy-3-methylpentanoate + NADP(+) = (S)-2-ethyl-2-hydroxy-3-oxobutanoate + NADPH + H(+). The protein operates within amino-acid biosynthesis; L-isoleucine biosynthesis; L-isoleucine from 2-oxobutanoate: step 2/4. Its pathway is amino-acid biosynthesis; L-valine biosynthesis; L-valine from pyruvate: step 2/4. In terms of biological role, involved in the biosynthesis of branched-chain amino acids (BCAA). Catalyzes an alkyl-migration followed by a ketol-acid reduction of (S)-2-acetolactate (S2AL) to yield (R)-2,3-dihydroxy-isovalerate. In the isomerase reaction, S2AL is rearranged via a Mg-dependent methyl migration to produce 3-hydroxy-3-methyl-2-ketobutyrate (HMKB). In the reductase reaction, this 2-ketoacid undergoes a metal-dependent reduction by NADPH to yield (R)-2,3-dihydroxy-isovalerate. This is Ketol-acid reductoisomerase (NADP(+)) from Leptospira borgpetersenii serovar Hardjo-bovis (strain JB197).